Here is a 442-residue protein sequence, read N- to C-terminus: Cell division protein FtsA (442 aa).

Positions 401-428 are disordered; that stretch reads VTSYDNDSYDAPEETVYDEPEQKKSDED. The segment covering 407 to 419 has biased composition (acidic residues); that stretch reads DSYDAPEETVYDE.

It belongs to the FtsA/MreB family. As to quaternary structure, self-interacts. Interacts with FtsZ.

The protein localises to the cell membrane. In terms of biological role, cell division protein that is involved in the assembly of the Z ring. May serve as a membrane anchor for the Z ring. The sequence is that of Cell division protein FtsA from Enterococcus hirae.